The primary structure comprises 469 residues: Argininosuccinate lyase (469 aa).

The protein belongs to the lyase 1 family. Argininosuccinate lyase subfamily.

The protein localises to the cytoplasm. The catalysed reaction is 2-(N(omega)-L-arginino)succinate = fumarate + L-arginine. It participates in amino-acid biosynthesis; L-arginine biosynthesis; L-arginine from L-ornithine and carbamoyl phosphate: step 3/3. This chain is Argininosuccinate lyase, found in Burkholderia multivorans (strain ATCC 17616 / 249).